The sequence spans 302 residues: Small ribosomal subunit protein uS2 (302 aa).

A disordered region spans residues 275-302 (EGEGESEAEPVVAKKKPVRAKRPAVKAE). Positions 287-302 (AKKKPVRAKRPAVKAE) are enriched in basic residues.

This sequence belongs to the universal ribosomal protein uS2 family.

The protein is Small ribosomal subunit protein uS2 of Opitutus terrae (strain DSM 11246 / JCM 15787 / PB90-1).